The primary structure comprises 344 residues: Lysophosphatidic acid receptor 6 (344 aa).

At 1-19 (MVSVNSSHCFYNDSFKYTL) the chain is on the extracellular side. A glycan (N-linked (GlcNAc...) asparagine) is linked at N5. The helical transmembrane segment at 20 to 46 (YGCMFSMVFVLGLISNCVAIYIFICVL) threads the bilayer. The Cytoplasmic segment spans residues 47 to 55 (KVRNETTTY). Residues 56-79 (MINLAMSDLLFVFTLPFRIFYFTT) form a helical membrane-spanning segment. The Extracellular portion of the chain corresponds to 80–92 (RNWPFGDLLCKIS). C89 and C168 are oxidised to a cystine. The chain crosses the membrane as a helical span at residues 93 to 112 (VMLFYTNMYGSILFLTCISV). Topologically, residues 113–133 (DRFLAIVYPFKSKTLRTKRNA) are cytoplasmic. The helical transmembrane segment at 134 to 154 (KIVCTGVWLTVIGGSAPAVFV) threads the bilayer. Residues 155–181 (QSTHSQGNNASEACFENFPEATWKTYL) lie on the Extracellular side of the membrane. A helical transmembrane segment spans residues 182–209 (SRIVIFIEIVGFFIPLILNVTCSSMVLK). Topologically, residues 210 to 227 (TLTKPVTLSRSKINKTKV) are cytoplasmic. The chain crosses the membrane as a helical span at residues 228–253 (LKMIFVHLIIFCFCFVPYNINLILYS). The Extracellular portion of the chain corresponds to 254–272 (LVRTQTFVNCSVVAAVRTM). A helical transmembrane segment spans residues 273–292 (YPITLCIAVSNCCFDPIVYY). C284 carries S-palmitoyl cysteine lipidation. At 293–344 (FTSDTIQNSIKMKNWSVRRSDFRFSEVHGAENFIQHNLQTLKSKIFDNESAA) the chain is on the cytoplasmic side.

This sequence belongs to the G-protein coupled receptor 1 family. Expressed ubiquitously, including in skin and hair follicle cells. Detected in both Henle's and Huxley's layers of the inner root sheath of the hair follicle and in suprabasal layers of the epidermis (at protein level). Expressed at low levels in peripheral blood leukocytes.

The protein localises to the cell membrane. Its function is as follows. Binds to oleoyl-L-alpha-lysophosphatidic acid (LPA). Intracellular cAMP is involved in the receptor activation. Important for the maintenance of hair growth and texture. The polypeptide is Lysophosphatidic acid receptor 6 (LPAR6) (Homo sapiens (Human)).